Consider the following 57-residue polypeptide: Small ribosomal subunit protein bS21 (57 aa).

The tract at residues 34 to 57 is disordered; sequence RKEHYIKPSVQKKNRQKNMRSKKR. A compositionally biased stretch (basic residues) spans 43 to 57; that stretch reads VQKKNRQKNMRSKKR.

The protein belongs to the bacterial ribosomal protein bS21 family.

This is Small ribosomal subunit protein bS21 from Aster yellows witches'-broom phytoplasma (strain AYWB).